Consider the following 423-residue polypeptide: UPF0229 protein PSPA7_0730 (423 aa).

The segment at 84–107 (AGEHIARPSGGGGGRGGGKASNSG) is disordered. Residues 92–102 (SGGGGGRGGGK) are compositionally biased toward gly residues.

It belongs to the UPF0229 family.

The chain is UPF0229 protein PSPA7_0730 from Pseudomonas paraeruginosa (strain DSM 24068 / PA7) (Pseudomonas aeruginosa (strain PA7)).